A 299-amino-acid chain; its full sequence is UDP-N-acetylenolpyruvoylglucosamine reductase (299 aa).

An FAD-binding PCMH-type domain is found at 21-189 (RVGGPAQWLL…LSARFRLEPG (169 aa)). Residue Arg168 is part of the active site. Ser219 functions as the Proton donor in the catalytic mechanism. The active site involves Glu289.

Belongs to the MurB family. The cofactor is FAD.

The protein resides in the cytoplasm. The enzyme catalyses UDP-N-acetyl-alpha-D-muramate + NADP(+) = UDP-N-acetyl-3-O-(1-carboxyvinyl)-alpha-D-glucosamine + NADPH + H(+). Its pathway is cell wall biogenesis; peptidoglycan biosynthesis. Cell wall formation. This Parasynechococcus marenigrum (strain WH8102) protein is UDP-N-acetylenolpyruvoylglucosamine reductase.